The chain runs to 328 residues: Isopenicillin N synthase (328 aa).

Isopenicillin N is bound by residues Arg-85, Tyr-89, Ser-181, and Tyr-187. Residues Arg-85, Tyr-89, Ser-181, Tyr-187, His-210, and Asp-212 each coordinate N-[(5S)-5-amino-5-carboxypentanoyl]-L-cysteinyl-D-valine. The region spanning 178 to 284 (TLSSVSLIRY…RLSLPFFFHA (107 aa)) is the Fe2OG dioxygenase domain. Residues His-210, Asp-212, and His-266 each coordinate Fe(2+). Position 275 (Arg-275) interacts with 2-oxoglutarate. An isopenicillin N-binding site is contributed by Ser-277. Ser-277 lines the N-[(5S)-5-amino-5-carboxypentanoyl]-L-cysteinyl-D-valine pocket.

This sequence belongs to the iron/ascorbate-dependent oxidoreductase family. Fe cation serves as cofactor. It depends on L-ascorbate as a cofactor.

The enzyme catalyses N-[(5S)-5-amino-5-carboxypentanoyl]-L-cysteinyl-D-valine + O2 = isopenicillin N + 2 H2O. Its pathway is antibiotic biosynthesis; penicillin G biosynthesis; penicillin G from L-alpha-aminoadipate and L-cysteine and L-valine: step 2/3. Its function is as follows. Removes, in the presence of oxygen, 4 hydrogen atoms from delta-L-(alpha-aminoadipyl)-L-cysteinyl-D-valine (ACV) to form the azetidinone and thiazolidine rings of isopenicillin. This chain is Isopenicillin N synthase (pcbC), found in Amycolatopsis lactamdurans (Nocardia lactamdurans).